The chain runs to 170 residues: Translationally-controlled tumor protein homolog (170 aa).

The TCTP domain maps to 1 to 170 (MLIYSDIITG…WKHGLKETKV (170 aa)).

The protein belongs to the TCTP family.

It is found in the cytoplasm. It localises to the cytoskeleton. Functionally, involved in protein synthesis. Involved in microtubule stabilization. The protein is Translationally-controlled tumor protein homolog of Neurospora crassa (strain ATCC 24698 / 74-OR23-1A / CBS 708.71 / DSM 1257 / FGSC 987).